Here is a 209-residue protein sequence, read N- to C-terminus: Small ribosomal subunit protein uS4 (209 aa).

Positions 98–164 (SRLDNVVYRG…TPFIVARETA (67 aa)) constitute an S4 RNA-binding domain.

This sequence belongs to the universal ribosomal protein uS4 family. Part of the 30S ribosomal subunit. Contacts protein S5. The interaction surface between S4 and S5 is involved in control of translational fidelity.

Its function is as follows. One of the primary rRNA binding proteins, it binds directly to 16S rRNA where it nucleates assembly of the body of the 30S subunit. With S5 and S12 plays an important role in translational accuracy. This Frankia casuarinae (strain DSM 45818 / CECT 9043 / HFP020203 / CcI3) protein is Small ribosomal subunit protein uS4.